The following is a 1220-amino-acid chain: DNA-directed RNA polymerase subunit beta (1220 aa).

Belongs to the RNA polymerase beta chain family. As to quaternary structure, the RNAP catalytic core consists of 2 alpha, 1 beta, 1 beta' and 1 omega subunit. When a sigma factor is associated with the core the holoenzyme is formed, which can initiate transcription.

The catalysed reaction is RNA(n) + a ribonucleoside 5'-triphosphate = RNA(n+1) + diphosphate. DNA-dependent RNA polymerase catalyzes the transcription of DNA into RNA using the four ribonucleoside triphosphates as substrates. The protein is DNA-directed RNA polymerase subunit beta of Mesomycoplasma hyopneumoniae (strain 232) (Mycoplasma hyopneumoniae).